Here is a 62-residue protein sequence, read N- to C-terminus: Large ribosomal subunit protein bL28 (62 aa).

Positions 1 to 28 (MARVCTITGRKARSGNSRSHAMNATKRK) are disordered.

It belongs to the bacterial ribosomal protein bL28 family.

The polypeptide is Large ribosomal subunit protein bL28 (Bacillus anthracis (strain CDC 684 / NRRL 3495)).